The chain runs to 260 residues: Tryptophan synthase alpha chain (260 aa).

Catalysis depends on proton acceptor residues E52 and D63.

The protein belongs to the TrpA family. As to quaternary structure, tetramer of two alpha and two beta chains.

The enzyme catalyses (1S,2R)-1-C-(indol-3-yl)glycerol 3-phosphate + L-serine = D-glyceraldehyde 3-phosphate + L-tryptophan + H2O. The protein operates within amino-acid biosynthesis; L-tryptophan biosynthesis; L-tryptophan from chorismate: step 5/5. Functionally, the alpha subunit is responsible for the aldol cleavage of indoleglycerol phosphate to indole and glyceraldehyde 3-phosphate. This is Tryptophan synthase alpha chain from Streptococcus thermophilus (strain ATCC BAA-250 / LMG 18311).